The following is a 473-amino-acid chain: Adenosylhomocysteinase (473 aa).

Substrate-binding residues include Thr64, Asp139, and Glu199. 200–202 (TTT) contacts NAD(+). Lys229 and Asp233 together coordinate substrate. Residues Asn234, 263–268 (GYGDVG), Glu286, Asn321, 342–344 (IGH), and Asn387 each bind NAD(+).

Belongs to the adenosylhomocysteinase family. The cofactor is NAD(+).

It localises to the cytoplasm. It carries out the reaction S-adenosyl-L-homocysteine + H2O = L-homocysteine + adenosine. The protein operates within amino-acid biosynthesis; L-homocysteine biosynthesis; L-homocysteine from S-adenosyl-L-homocysteine: step 1/1. Its function is as follows. May play a key role in the regulation of the intracellular concentration of adenosylhomocysteine. This chain is Adenosylhomocysteinase, found in Burkholderia thailandensis (strain ATCC 700388 / DSM 13276 / CCUG 48851 / CIP 106301 / E264).